An 80-amino-acid polypeptide reads, in one-letter code: Metallothionein-like protein 2B (80 aa).

The protein belongs to the metallothionein superfamily. Type 15 family. In terms of tissue distribution, highly expressed in stems. Expressed in leaves and rachis.

Functionally, metallothioneins have a high content of cysteine residues that bind various heavy metals. This Oryza sativa subsp. japonica (Rice) protein is Metallothionein-like protein 2B (MT2B).